The sequence spans 447 residues: Methylenetetrahydrofolate--tRNA-(uracil-5-)-methyltransferase TrmFO (447 aa).

An FAD-binding site is contributed by glycine 10 to glycine 15.

Belongs to the MnmG family. TrmFO subfamily. The cofactor is FAD.

The protein resides in the cytoplasm. It catalyses the reaction uridine(54) in tRNA + (6R)-5,10-methylene-5,6,7,8-tetrahydrofolate + NADH + H(+) = 5-methyluridine(54) in tRNA + (6S)-5,6,7,8-tetrahydrofolate + NAD(+). It carries out the reaction uridine(54) in tRNA + (6R)-5,10-methylene-5,6,7,8-tetrahydrofolate + NADPH + H(+) = 5-methyluridine(54) in tRNA + (6S)-5,6,7,8-tetrahydrofolate + NADP(+). In terms of biological role, catalyzes the folate-dependent formation of 5-methyl-uridine at position 54 (M-5-U54) in all tRNAs. This Lactococcus lactis subsp. lactis (strain IL1403) (Streptococcus lactis) protein is Methylenetetrahydrofolate--tRNA-(uracil-5-)-methyltransferase TrmFO.